The sequence spans 332 residues: 4-hydroxy-3-methylbut-2-enyl diphosphate reductase (332 aa).

Cys-13 contributes to the [4Fe-4S] cluster binding site. The (2E)-4-hydroxy-3-methylbut-2-enyl diphosphate site is built by His-41 and His-75. The dimethylallyl diphosphate site is built by His-41 and His-75. His-41 and His-75 together coordinate isopentenyl diphosphate. A [4Fe-4S] cluster-binding site is contributed by Cys-97. Residue His-125 coordinates (2E)-4-hydroxy-3-methylbut-2-enyl diphosphate. His-125 is a binding site for dimethylallyl diphosphate. His-125 serves as a coordination point for isopentenyl diphosphate. Catalysis depends on Glu-127, which acts as the Proton donor. Position 168 (Thr-168) interacts with (2E)-4-hydroxy-3-methylbut-2-enyl diphosphate. Cys-229 contributes to the [4Fe-4S] cluster binding site. Positions 257, 258, 259, and 306 each coordinate (2E)-4-hydroxy-3-methylbut-2-enyl diphosphate. Residues Ser-257, Ser-258, Asn-259, and Ser-306 each contribute to the dimethylallyl diphosphate site. 4 residues coordinate isopentenyl diphosphate: Ser-257, Ser-258, Asn-259, and Ser-306.

The protein belongs to the IspH family. The cofactor is [4Fe-4S] cluster.

It carries out the reaction isopentenyl diphosphate + 2 oxidized [2Fe-2S]-[ferredoxin] + H2O = (2E)-4-hydroxy-3-methylbut-2-enyl diphosphate + 2 reduced [2Fe-2S]-[ferredoxin] + 2 H(+). It catalyses the reaction dimethylallyl diphosphate + 2 oxidized [2Fe-2S]-[ferredoxin] + H2O = (2E)-4-hydroxy-3-methylbut-2-enyl diphosphate + 2 reduced [2Fe-2S]-[ferredoxin] + 2 H(+). It functions in the pathway isoprenoid biosynthesis; dimethylallyl diphosphate biosynthesis; dimethylallyl diphosphate from (2E)-4-hydroxy-3-methylbutenyl diphosphate: step 1/1. It participates in isoprenoid biosynthesis; isopentenyl diphosphate biosynthesis via DXP pathway; isopentenyl diphosphate from 1-deoxy-D-xylulose 5-phosphate: step 6/6. Catalyzes the conversion of 1-hydroxy-2-methyl-2-(E)-butenyl 4-diphosphate (HMBPP) into a mixture of isopentenyl diphosphate (IPP) and dimethylallyl diphosphate (DMAPP). Acts in the terminal step of the DOXP/MEP pathway for isoprenoid precursor biosynthesis. This is 4-hydroxy-3-methylbut-2-enyl diphosphate reductase from Chlorobaculum tepidum (strain ATCC 49652 / DSM 12025 / NBRC 103806 / TLS) (Chlorobium tepidum).